We begin with the raw amino-acid sequence, 375 residues long: Serpentine receptor class alpha-39 (375 aa).

Helical transmembrane passes span 17 to 37 (LFAI…LFII), 51 to 71 (LVFL…LTAW), 99 to 119 (IRGT…GILL), 138 to 158 (LGTI…FILL), 183 to 203 (VYVM…VHLV), 236 to 256 (TPLL…VSVF), and 275 to 295 (LFIM…ELWL).

This sequence belongs to the nematode receptor-like protein sra family.

Its subcellular location is the membrane. The polypeptide is Serpentine receptor class alpha-39 (sra-39) (Caenorhabditis elegans).